A 264-amino-acid chain; its full sequence is Putative hydro-lyase Psyr_0498 (264 aa).

The protein belongs to the D-glutamate cyclase family.

This is Putative hydro-lyase Psyr_0498 from Pseudomonas syringae pv. syringae (strain B728a).